The sequence spans 132 residues: Small ribosomal subunit protein uS8c (132 aa).

Belongs to the universal ribosomal protein uS8 family. As to quaternary structure, part of the 30S ribosomal subunit.

Its subcellular location is the plastid. It is found in the chloroplast. Its function is as follows. One of the primary rRNA binding proteins, it binds directly to 16S rRNA central domain where it helps coordinate assembly of the platform of the 30S subunit. This Platanus occidentalis (Sycamore) protein is Small ribosomal subunit protein uS8c (rps8).